The following is a 337-amino-acid chain: Viral cathepsin (337 aa).

Residues 1–16 (MNKILILLLLVSAVLT) form the signal peptide. The propeptide at 17 to 126 (SHDQVVAVTI…VVDGPGQRQR (110 aa)) is activation peptide. 3 disulfide bridges follow: cysteine 147–cysteine 188, cysteine 181–cysteine 221, and cysteine 276–cysteine 324. Cysteine 150 is a catalytic residue. Active-site residues include histidine 283 and asparagine 303.

The protein belongs to the peptidase C1 family. Synthesized as an inactive proenzyme and activated by proteolytic removal of the inhibitory propeptide.

It carries out the reaction Endopeptidase of broad specificity, hydrolyzing substrates of both cathepsin L and cathepsin B.. In terms of biological role, cysteine protease that plays an essential role in host liquefaction to facilitate horizontal transmission of the virus. May participate in the degradation of foreign protein expressed by the baculovirus system. The protein is Viral cathepsin (VCATH) of Mamestra configurata (bertha armyworm).